We begin with the raw amino-acid sequence, 435 residues long: Trigger factor (435 aa).

Positions 161-246 (DDQVTLDFEG…LTKVEEQILP (86 aa)) constitute a PPIase FKBP-type domain.

It belongs to the FKBP-type PPIase family. Tig subfamily.

The protein resides in the cytoplasm. It carries out the reaction [protein]-peptidylproline (omega=180) = [protein]-peptidylproline (omega=0). Involved in protein export. Acts as a chaperone by maintaining the newly synthesized protein in an open conformation. Functions as a peptidyl-prolyl cis-trans isomerase. This chain is Trigger factor, found in Psychromonas ingrahamii (strain DSM 17664 / CCUG 51855 / 37).